Here is a 266-residue protein sequence, read N- to C-terminus: Shikimate dehydrogenase (NADP(+)) (266 aa).

Residues 16-18 and Thr-65 each bind shikimate; that span reads SKS. Residue Lys-69 is the Proton acceptor of the active site. The shikimate site is built by Asn-90 and Asp-105. NADP(+)-binding positions include 128–132 and Leu-211; that span reads GAGGS. Position 213 (Tyr-213) interacts with shikimate. NADP(+) is bound at residue Gly-233.

The protein belongs to the shikimate dehydrogenase family. Homodimer.

The enzyme catalyses shikimate + NADP(+) = 3-dehydroshikimate + NADPH + H(+). It functions in the pathway metabolic intermediate biosynthesis; chorismate biosynthesis; chorismate from D-erythrose 4-phosphate and phosphoenolpyruvate: step 4/7. Its function is as follows. Involved in the biosynthesis of the chorismate, which leads to the biosynthesis of aromatic amino acids. Catalyzes the reversible NADPH linked reduction of 3-dehydroshikimate (DHSA) to yield shikimate (SA). The sequence is that of Shikimate dehydrogenase (NADP(+)) from Helicobacter pylori (strain J99 / ATCC 700824) (Campylobacter pylori J99).